Here is a 183-residue protein sequence, read N- to C-terminus: MDLNISTALRSFTQRYIDLWQQQTGHLPASKDLYGVPSPCIVATGEDQVFWQPQAFLPEATLTNIERALEIQLHPDIHDFYTQQYAGDMMADLGNHRFTLLQVWSEDDFIRLQENLIGHLVTQKRLKLSPTLFLATTSSEMTMASLCNVSGNVVLEQFGSDKRTLLASTLSHFLDALRPVLPE.

This sequence belongs to the Syd family.

It is found in the cell inner membrane. Interacts with the SecY protein in vivo. May bind preferentially to an uncomplexed state of SecY, thus functioning either as a chelating agent for excess SecY in the cell or as a regulatory factor that negatively controls the translocase function. This chain is Protein Syd, found in Yersinia pseudotuberculosis serotype O:1b (strain IP 31758).